A 1380-amino-acid polypeptide reads, in one-letter code: Tripeptidyl-peptidase 2 (1380 aa).

The 510-residue stretch at 110-619 (STFIASLMPK…QGLMQVDKAY (510 aa)) folds into the Peptidase S8 domain. Catalysis depends on charge relay system residues Asp-145, His-372, and Ser-558. Residues 1099–1143 (DEKEGKNPKDNPVSYPISYVVPPNKPEEDKKAASAPTCSKSVSER) form a disordered region. A compositionally biased stretch (low complexity) spans 1110 to 1120 (PVSYPISYVVP). Coiled coils occupy residues 1152–1181 (KIKF…KSEY) and 1238–1300 (EDDE…ELTK).

The protein belongs to the peptidase S8 family. As to quaternary structure, assembles into a large oligomeric complex containing two related proteins 153 and 142 kDa that are derived from the single TPP2 gene. The 142 kDa form mainly differs from the 153 kDa form by a truncation at the C-terminal end.

It catalyses the reaction Release of an N-terminal tripeptide from a polypeptide.. With respect to regulation, inhibited by alanine-alanine-phenylalanine-chloromethylketone, butabindide and phenylmethanesulfonyl fluoride (PMSF), but not by leupeptin, N-ethylmaleimide, EDTA, MG132 and lactacystin. Functionally, serine protease of the proteasome pathway that may function with the 20S proteasome to degrade oxidized proteins generated by environmental stress. This chain is Tripeptidyl-peptidase 2 (TPP2), found in Arabidopsis thaliana (Mouse-ear cress).